Here is a 296-residue protein sequence, read N- to C-terminus: Phosphoribosylaminoimidazole-succinocarboxamide synthase (296 aa).

This sequence belongs to the SAICAR synthetase family.

It catalyses the reaction 5-amino-1-(5-phospho-D-ribosyl)imidazole-4-carboxylate + L-aspartate + ATP = (2S)-2-[5-amino-1-(5-phospho-beta-D-ribosyl)imidazole-4-carboxamido]succinate + ADP + phosphate + 2 H(+). Its pathway is purine metabolism; IMP biosynthesis via de novo pathway; 5-amino-1-(5-phospho-D-ribosyl)imidazole-4-carboxamide from 5-amino-1-(5-phospho-D-ribosyl)imidazole-4-carboxylate: step 1/2. This chain is Phosphoribosylaminoimidazole-succinocarboxamide synthase, found in Syntrophotalea carbinolica (strain DSM 2380 / NBRC 103641 / GraBd1) (Pelobacter carbinolicus).